We begin with the raw amino-acid sequence, 467 residues long: Phosphoglucosamine mutase (467 aa).

The Phosphoserine intermediate role is filled by S120. Mg(2+)-binding residues include S120, D261, D263, and D265. Position 120 is a phosphoserine (S120).

Belongs to the phosphohexose mutase family. Mg(2+) serves as cofactor. In terms of processing, activated by phosphorylation.

It carries out the reaction alpha-D-glucosamine 1-phosphate = D-glucosamine 6-phosphate. Functionally, catalyzes the conversion of glucosamine-6-phosphate to glucosamine-1-phosphate. This Parafrankia sp. (strain EAN1pec) protein is Phosphoglucosamine mutase.